We begin with the raw amino-acid sequence, 288 residues long: tRNA pseudouridine synthase A (288 aa).

Residue Asp-58 is the Nucleophile of the active site. Tyr-124 contacts substrate.

Belongs to the tRNA pseudouridine synthase TruA family. In terms of assembly, homodimer.

The enzyme catalyses uridine(38/39/40) in tRNA = pseudouridine(38/39/40) in tRNA. Functionally, formation of pseudouridine at positions 38, 39 and 40 in the anticodon stem and loop of transfer RNAs. This Corynebacterium diphtheriae (strain ATCC 700971 / NCTC 13129 / Biotype gravis) protein is tRNA pseudouridine synthase A.